The sequence spans 468 residues: Immunoglobulin superfamily member 21 (468 aa).

Residues 1–24 (MQAAPSLRRASCLLLAAILDLARG) form the signal peptide. The 108-residue stretch at 25-132 (YLTVNIEPLP…RATREKVVLA (108 aa)) folds into the Ig-like 1 domain. A disulfide bridge connects residues Cys-46 and Cys-116. N-linked (GlcNAc...) asparagine glycans are attached at residues Asn-82, Asn-165, and Asn-407. Residues 344 to 429 (PKIMMTPSRA…GSTDTHTRLI (86 aa)) form the Ig-like 2 domain.

As to quaternary structure, interacts (Ig-like 1 domain) with NRXN2 (via Laminin G-like 1 domain) in a trans-interaction manner. Expressed in brain (at protein levels). Highly expressed in the pyramidal cell layer of the dorsal and ventral hippocampal CA1 and CA3 regions, layers 5 and 6 of the cortex, the thalamus and the pons and weakly expressed in the cerebellum. Expressed in neurons but not in glia.

Its subcellular location is the postsynaptic cell membrane. In terms of biological role, involved in synaptic inhibition in the brain. Selectively regulates inhibitory presynaptic differentiation through interacting with presynaptic NRXN2. This Mus musculus (Mouse) protein is Immunoglobulin superfamily member 21 (Igsf21).